Consider the following 336-residue polypeptide: Dihydroorotate dehydrogenase (quinone) (336 aa).

FMN-binding positions include 62–66 (AGLDK) and Thr86. Lys66 contributes to the substrate binding site. 111-115 (NRFGF) is a substrate binding site. FMN is bound by residues Asn139 and Asn172. Asn172 serves as a coordination point for substrate. Ser175 (nucleophile) is an active-site residue. Asn177 is a binding site for substrate. FMN contacts are provided by Lys217 and Thr245. Position 246–247 (246–247 (NT)) interacts with substrate. FMN-binding positions include Gly268, Gly297, and 318-319 (YS).

It belongs to the dihydroorotate dehydrogenase family. Type 2 subfamily. Monomer. FMN serves as cofactor.

The protein resides in the cell membrane. The catalysed reaction is (S)-dihydroorotate + a quinone = orotate + a quinol. It participates in pyrimidine metabolism; UMP biosynthesis via de novo pathway; orotate from (S)-dihydroorotate (quinone route): step 1/1. Functionally, catalyzes the conversion of dihydroorotate to orotate with quinone as electron acceptor. In Photobacterium profundum (strain SS9), this protein is Dihydroorotate dehydrogenase (quinone).